The sequence spans 303 residues: Coenzyme PQQ synthesis protein B (303 aa).

It belongs to the PqqB family.

Its pathway is cofactor biosynthesis; pyrroloquinoline quinone biosynthesis. Functionally, may be involved in the transport of PQQ or its precursor to the periplasm. In Acinetobacter baumannii (strain AYE), this protein is Coenzyme PQQ synthesis protein B.